The primary structure comprises 180 residues: Centromere protein M (180 aa).

In terms of assembly, component of the CENPA-NAC complex, at least composed of CENPA, CENPC, CENPH, CENPM, CENPN, CENPT and CENPU. The CENPA-NAC complex interacts with the CENPA-CAD complex, composed of CENPI, CENPK, CENPL, CENPO, CENPP, CENPQ, CENPR and CENPS.

Its subcellular location is the nucleus. The protein localises to the cytoplasm. It localises to the chromosome. It is found in the centromere. The protein resides in the kinetochore. Its function is as follows. Component of the CENPA-NAC (nucleosome-associated) complex, a complex that plays a central role in assembly of kinetochore proteins, mitotic progression and chromosome segregation. The CENPA-NAC complex recruits the CENPA-CAD (nucleosome distal) complex and may be involved in incorporation of newly synthesized CENPA into centromeres. This chain is Centromere protein M (CENPM), found in Bos taurus (Bovine).